Here is a 547-residue protein sequence, read N- to C-terminus: 2-succinyl-5-enolpyruvyl-6-hydroxy-3-cyclohexene-1-carboxylate synthase (547 aa).

It belongs to the TPP enzyme family. MenD subfamily. As to quaternary structure, homodimer. The cofactor is Mg(2+). Mn(2+) serves as cofactor. Requires thiamine diphosphate as cofactor.

It carries out the reaction isochorismate + 2-oxoglutarate + H(+) = 5-enolpyruvoyl-6-hydroxy-2-succinyl-cyclohex-3-ene-1-carboxylate + CO2. It participates in quinol/quinone metabolism; 1,4-dihydroxy-2-naphthoate biosynthesis; 1,4-dihydroxy-2-naphthoate from chorismate: step 2/7. It functions in the pathway quinol/quinone metabolism; menaquinone biosynthesis. In terms of biological role, catalyzes the thiamine diphosphate-dependent decarboxylation of 2-oxoglutarate and the subsequent addition of the resulting succinic semialdehyde-thiamine pyrophosphate anion to isochorismate to yield 2-succinyl-5-enolpyruvyl-6-hydroxy-3-cyclohexene-1-carboxylate (SEPHCHC). The chain is 2-succinyl-5-enolpyruvyl-6-hydroxy-3-cyclohexene-1-carboxylate synthase from Mycobacterium sp. (strain JLS).